The sequence spans 101 residues: Putative pterin-4-alpha-carbinolamine dehydratase (101 aa).

The protein belongs to the pterin-4-alpha-carbinolamine dehydratase family.

It carries out the reaction (4aS,6R)-4a-hydroxy-L-erythro-5,6,7,8-tetrahydrobiopterin = (6R)-L-erythro-6,7-dihydrobiopterin + H2O. The protein is Putative pterin-4-alpha-carbinolamine dehydratase (phhB) of Ralstonia nicotianae (strain ATCC BAA-1114 / GMI1000) (Ralstonia solanacearum).